The primary structure comprises 150 residues: D-aminoacyl-tRNA deacylase (150 aa).

The short motif at G138–P139 is the Gly-cisPro motif, important for rejection of L-amino acids element.

This sequence belongs to the DTD family. Homodimer.

It is found in the cytoplasm. It catalyses the reaction glycyl-tRNA(Ala) + H2O = tRNA(Ala) + glycine + H(+). It carries out the reaction a D-aminoacyl-tRNA + H2O = a tRNA + a D-alpha-amino acid + H(+). An aminoacyl-tRNA editing enzyme that deacylates mischarged D-aminoacyl-tRNAs. Also deacylates mischarged glycyl-tRNA(Ala), protecting cells against glycine mischarging by AlaRS. Acts via tRNA-based rather than protein-based catalysis; rejects L-amino acids rather than detecting D-amino acids in the active site. By recycling D-aminoacyl-tRNA to D-amino acids and free tRNA molecules, this enzyme counteracts the toxicity associated with the formation of D-aminoacyl-tRNA entities in vivo and helps enforce protein L-homochirality. The sequence is that of D-aminoacyl-tRNA deacylase from Christiangramia forsetii (strain DSM 17595 / CGMCC 1.15422 / KT0803) (Gramella forsetii).